A 675-amino-acid polypeptide reads, in one-letter code: MNQNIQQQIDELRVTLRHHEYLYHVMDAPEIPDAEYDRLMNKLKALEAEHPELITPDSPTQRVGALPLTAFEQVRHEIPMLSLDNAFDETTYLAFDKRLRERLKNNEEITFCCELKLDGLAVSLLYENGRLVQAATRGDGTTGENITENVRTIKAIPLRLYGDNIPARIEIRGEVFMTEKGFEHLNEEARRTGGKVFANPRNAAAGSLRQLDPRITAKRPLTFFCYGVGVLEGGELPTSHYARLQQFKKWGLPVSDAIKLCTGTKAVLDFYHHVAEIRPNLGFDIDGVVIKVDDIALQEELGFVSRAPRWAIAYKFQAQEQMTVIKDVEFQVGRTGAITPVARLDPVQVAGVIVSNATLHNADEIERLGLRIGDTVVIRRAGDVIPQVVSVIEEKRPENAQEIVFPTQCPICQSDIERIEGEAVARCTGGLICAAQRKEALKHFVSRRAMDVDGMGDKIIDQLVEKEYVKTPADLFRLDEKILSGLERMGEKSAKKLLNALEKAKSTTFARFIYALGIREVGEATANGLTAHFVSLEALREANIEALKAVPDVGDIVAKHVVNFFQEEHNKNVIDQLVNDIGITWPAPVVATHEAGDNPFAGKTVVLTGSLSQLTRDEAKDRLVALGAKVSGSVSKKTDMVIAGEAAGSKLAKANELGITVIDEDEMIRLLDQSK.

NAD(+)-binding positions include 33–37, 82–83, and glutamate 114; these read DAEYD and SL. Lysine 116 serves as the catalytic N6-AMP-lysine intermediate. Positions 137, 174, 291, and 315 each coordinate NAD(+). Zn(2+) contacts are provided by cysteine 409, cysteine 412, cysteine 427, and cysteine 433. Residues 595-675 form the BRCT domain; sequence AGDNPFAGKT…EMIRLLDQSK (81 aa).

It belongs to the NAD-dependent DNA ligase family. LigA subfamily. Mg(2+) serves as cofactor. Requires Mn(2+) as cofactor.

It carries out the reaction NAD(+) + (deoxyribonucleotide)n-3'-hydroxyl + 5'-phospho-(deoxyribonucleotide)m = (deoxyribonucleotide)n+m + AMP + beta-nicotinamide D-nucleotide.. DNA ligase that catalyzes the formation of phosphodiester linkages between 5'-phosphoryl and 3'-hydroxyl groups in double-stranded DNA using NAD as a coenzyme and as the energy source for the reaction. It is essential for DNA replication and repair of damaged DNA. The chain is DNA ligase from Proteus mirabilis (strain HI4320).